The primary structure comprises 217 residues: LexA repressor (217 aa).

A DNA-binding region (H-T-H motif) is located at residues 28 to 48; it reads RAEIAAEFGFSSPNAAEEHLR. Catalysis depends on for autocatalytic cleavage activity residues serine 136 and lysine 173.

This sequence belongs to the peptidase S24 family. Homodimer.

The catalysed reaction is Hydrolysis of Ala-|-Gly bond in repressor LexA.. Its function is as follows. Represses a number of genes involved in the response to DNA damage (SOS response), including recA and lexA. In the presence of single-stranded DNA, RecA interacts with LexA causing an autocatalytic cleavage which disrupts the DNA-binding part of LexA, leading to derepression of the SOS regulon and eventually DNA repair. The polypeptide is LexA repressor (Cupriavidus necator (strain ATCC 17699 / DSM 428 / KCTC 22496 / NCIMB 10442 / H16 / Stanier 337) (Ralstonia eutropha)).